We begin with the raw amino-acid sequence, 104 residues long: Co-chaperonin GroES 1 (104 aa).

It belongs to the GroES chaperonin family. As to quaternary structure, heptamer of 7 subunits arranged in a ring. Interacts with the chaperonin GroEL.

The protein resides in the cytoplasm. Functionally, together with the chaperonin GroEL, plays an essential role in assisting protein folding. The GroEL-GroES system forms a nano-cage that allows encapsulation of the non-native substrate proteins and provides a physical environment optimized to promote and accelerate protein folding. GroES binds to the apical surface of the GroEL ring, thereby capping the opening of the GroEL channel. The protein is Co-chaperonin GroES 1 of Mesorhizobium japonicum (strain LMG 29417 / CECT 9101 / MAFF 303099) (Mesorhizobium loti (strain MAFF 303099)).